Reading from the N-terminus, the 249-residue chain is 2,3-bisphosphoglycerate-dependent phosphoglycerate mutase (249 aa).

Substrate is bound by residues 9-16 (RHGQSQWN), 22-23 (TG), Arg61, 88-91 (ERHY), Lys99, 115-116 (RR), and 184-185 (GN). The active-site Tele-phosphohistidine intermediate is His10. Glu88 (proton donor/acceptor) is an active-site residue.

The protein belongs to the phosphoglycerate mutase family. BPG-dependent PGAM subfamily. As to quaternary structure, homodimer.

The catalysed reaction is (2R)-2-phosphoglycerate = (2R)-3-phosphoglycerate. It participates in carbohydrate degradation; glycolysis; pyruvate from D-glyceraldehyde 3-phosphate: step 3/5. Its function is as follows. Catalyzes the interconversion of 2-phosphoglycerate and 3-phosphoglycerate. The sequence is that of 2,3-bisphosphoglycerate-dependent phosphoglycerate mutase from Xylella fastidiosa (strain M12).